A 574-amino-acid polypeptide reads, in one-letter code: Arginine--tRNA ligase (574 aa).

The 'HIGH' region signature appears at 121 to 131 (PNIAKEMHIGH).

This sequence belongs to the class-I aminoacyl-tRNA synthetase family. Monomer.

The protein resides in the cytoplasm. The enzyme catalyses tRNA(Arg) + L-arginine + ATP = L-arginyl-tRNA(Arg) + AMP + diphosphate. The protein is Arginine--tRNA ligase of Buchnera aphidicola subsp. Acyrthosiphon pisum (strain 5A).